Reading from the N-terminus, the 487-residue chain is N-succinylglutamate 5-semialdehyde dehydrogenase (487 aa).

221–226 (GSSRTG) contacts NAD(+). Active-site residues include E244 and C278.

Belongs to the aldehyde dehydrogenase family. AstD subfamily.

The catalysed reaction is N-succinyl-L-glutamate 5-semialdehyde + NAD(+) + H2O = N-succinyl-L-glutamate + NADH + 2 H(+). It participates in amino-acid degradation; L-arginine degradation via AST pathway; L-glutamate and succinate from L-arginine: step 4/5. Functionally, catalyzes the NAD-dependent reduction of succinylglutamate semialdehyde into succinylglutamate. This is N-succinylglutamate 5-semialdehyde dehydrogenase from Ectopseudomonas mendocina (strain ymp) (Pseudomonas mendocina).